A 441-amino-acid polypeptide reads, in one-letter code: Anti-sigma-I factor RsgI (441 aa).

Over 1–53 the chain is Cytoplasmic; it reads MMNKGIVMDIKKHSVVVLTPNGEFITCKRKGDSCMIGEEISFDEQEQKASRFS. In terms of domain architecture, RsgI N-terminal anti-sigma spans 3 to 51; sequence NKGIVMDIKKHSVVVLTPNGEFITCKRKGDSCMIGEEISFDEQEQKASR. Residues 54–76 traverse the membrane as a helical segment; sequence IPYFLKPASLLVACFLCALLFFY. The Extracellular segment spans residues 77 to 441; the sequence is NQPEEKVFAY…HQQGNEKKNQ (365 aa). Residues 213 to 441 form a disordered region; it reads ENEKNKSVTP…HQQGNEKKNQ (229 aa). A compositionally biased stretch (polar residues) spans 219–230; the sequence is SVTPPATPSNPV. Over residues 240–251 the composition is skewed to low complexity; it reads PDSSPDVVPDLS. Residues 252-281 are compositionally biased toward basic and acidic residues; the sequence is SVKDKKYEKPEYKEQKKIEEQPTKQIKENN. Low complexity-rich tracts occupy residues 282-328, 336-358, and 366-408; these read GRGS…QQGN, NNGH…QQGN, and NNGH…NGRG. Residues 411 to 428 show a composition bias toward polar residues; it reads KENVGNEQGNNGRGSQQE. The span at 429–441 shows a compositional bias: basic and acidic residues; sequence NRGHQQGNEKKNQ.

In terms of assembly, interacts (via RsgI N-terminal anti-sigma domain) with SigI.

Its subcellular location is the cell membrane. Anti-sigma factor for SigI. Negatively regulates SigI activity through direct interaction. Has no direct effect on virulence gene expression. The sequence is that of Anti-sigma-I factor RsgI from Bacillus anthracis.